A 92-amino-acid chain; its full sequence is MATLRVPLLVALVLLAVAIQTSDAGPYGANVEDSICCQDYIRHPLPSRLVKEFFWTSKSCRKPGVVLITVKNRDICADPRQVWVKKLLHKLS.

The first 24 residues, 1 to 24 (MATLRVPLLVALVLLAVAIQTSDA), serve as a signal peptide directing secretion. 2 disulfide bridges follow: cysteine 36–cysteine 60 and cysteine 37–cysteine 76.

It belongs to the intercrine beta (chemokine CC) family. Expressed by activated splenic B-lymphocytes and dendritic cells. Low expression in lung, thymocytes, lymph node, and unstimulated splenic cells.

It localises to the secreted. Its function is as follows. Chemotactic for activated T-lymphocytes. May play an important role in the collaboration of dendritic cells and B-lymphocytes with T-cells in immune responses. This Mus musculus (Mouse) protein is C-C motif chemokine 22 (Ccl22).